We begin with the raw amino-acid sequence, 254 residues long: MKFWGSVLALSFVVFLFLTGTLAQNVGSIVTSDLFDQMLKNRNDARCFAVRFYTYDAFIAAANSFPGFGTTGDDTARKKEIAAFFGQTSHETTGGTLSPDGPYAGGYCFLREGNQMGNGYYGRGPIQLTGQSNYDLAGKAIEQDLVNNPDLVATDATVSFKTAIWFWMTPQGNKPSCHDVITGRWTPSAADTSANRVPGYGVITNIINGGIECGKGQNARVEDRIGYYRRNVSIMNVAPGDNLDCYNQRNFAEV.

An N-terminal signal peptide occupies residues 1–23 (MKFWGSVLALSFVVFLFLTGTLA). Catalysis depends on Glu91, which acts as the Proton donor. A disulfide bridge connects residues Cys213 and Cys245.

It belongs to the glycosyl hydrolase 19 family. Chitinase class II subfamily.

The protein localises to the secreted. The catalysed reaction is Random endo-hydrolysis of N-acetyl-beta-D-glucosaminide (1-&gt;4)-beta-linkages in chitin and chitodextrins.. In terms of biological role, defense against chitin-containing fungal pathogens. The sequence is that of Acidic endochitinase from Petunia hybrida (Petunia).